Consider the following 155-residue polypeptide: Cytochrome c-type biogenesis protein CcmE (155 aa).

Residues 1–8 (MNPLRKKR) lie on the Cytoplasmic side of the membrane. Residues 9-29 (LLIIVALLAGVGLAVTLALSA) form a helical; Signal-anchor for type II membrane protein membrane-spanning segment. Topologically, residues 30 to 155 (LQENINLFYT…AASPTPVKQG (126 aa)) are periplasmic. Residues His124 and Tyr128 each coordinate heme.

It belongs to the CcmE/CycJ family.

The protein resides in the cell inner membrane. Its function is as follows. Heme chaperone required for the biogenesis of c-type cytochromes. Transiently binds heme delivered by CcmC and transfers the heme to apo-cytochromes in a process facilitated by CcmF and CcmH. This is Cytochrome c-type biogenesis protein CcmE from Pseudomonas syringae pv. syringae (strain B728a).